The following is a 122-amino-acid chain: Large ribosomal subunit protein uL22 (122 aa).

The protein belongs to the universal ribosomal protein uL22 family. As to quaternary structure, part of the 50S ribosomal subunit.

In terms of biological role, this protein binds specifically to 23S rRNA; its binding is stimulated by other ribosomal proteins, e.g. L4, L17, and L20. It is important during the early stages of 50S assembly. It makes multiple contacts with different domains of the 23S rRNA in the assembled 50S subunit and ribosome. The globular domain of the protein is located near the polypeptide exit tunnel on the outside of the subunit, while an extended beta-hairpin is found that lines the wall of the exit tunnel in the center of the 70S ribosome. This Prochlorococcus marinus (strain MIT 9303) protein is Large ribosomal subunit protein uL22.